The chain runs to 545 residues: CTP synthase (545 aa).

Residues methionine 1–methionine 267 form an amidoligase domain region. Serine 13 is a binding site for CTP. A UTP-binding site is contributed by serine 13. ATP is bound by residues serine 14 to isoleucine 19 and aspartate 71. Residues aspartate 71 and glutamate 141 each coordinate Mg(2+). CTP-binding positions include aspartate 148–glutamate 150, lysine 188–glutamine 193, and lysine 224. UTP-binding positions include lysine 188–glutamine 193 and lysine 224. The Glutamine amidotransferase type-1 domain occupies glutamate 292–proline 534. Glycine 354 contacts L-glutamine. Cysteine 381 acts as the Nucleophile; for glutamine hydrolysis in catalysis. Residues leucine 382–glutamine 385, glutamate 405, and arginine 462 contribute to the L-glutamine site. Residues histidine 507 and glutamate 509 contribute to the active site.

Belongs to the CTP synthase family. In terms of assembly, homotetramer.

It carries out the reaction UTP + L-glutamine + ATP + H2O = CTP + L-glutamate + ADP + phosphate + 2 H(+). It catalyses the reaction L-glutamine + H2O = L-glutamate + NH4(+). The catalysed reaction is UTP + NH4(+) + ATP = CTP + ADP + phosphate + 2 H(+). Its pathway is pyrimidine metabolism; CTP biosynthesis via de novo pathway; CTP from UDP: step 2/2. Its activity is regulated as follows. Allosterically activated by GTP, when glutamine is the substrate; GTP has no effect on the reaction when ammonia is the substrate. The allosteric effector GTP functions by stabilizing the protein conformation that binds the tetrahedral intermediate(s) formed during glutamine hydrolysis. Inhibited by the product CTP, via allosteric rather than competitive inhibition. Functionally, catalyzes the ATP-dependent amination of UTP to CTP with either L-glutamine or ammonia as the source of nitrogen. Regulates intracellular CTP levels through interactions with the four ribonucleotide triphosphates. The chain is CTP synthase from Trichormus variabilis (strain ATCC 29413 / PCC 7937) (Anabaena variabilis).